The chain runs to 263 residues: Pyrrolysine synthase (263 aa).

L-pyrrolysine is bound by residues Leu8, Val57, Ile64, and Ala107. NAD(+)-binding residues include Lys155, Val156, Asp175, Cys210, Pro228, Ile230, and Glu249.

The protein belongs to the PylD family.

It catalyses the reaction (3R)-3-methyl-D-ornithyl-N(6)-L-lysine + NAD(+) = L-pyrrolysine + NH4(+) + NADH + 2 H(+). It functions in the pathway amino-acid biosynthesis; L-pyrrolysine biosynthesis. Catalyzes the ultimate step of the pyrrolysine biosynthesis pathway by converting the isopeptide (3R)-3-methyl-D-ornithyl-N(6)-L-lysine to the 22nd proteinogenic amino acid. Is able to use surrogate substrates such as (3R)-D-ornithyl-N(6)-L-lysine in vitro. The chain is Pyrrolysine synthase from Methanosarcina barkeri (strain Fusaro / DSM 804).